The sequence spans 144 residues: Large ribosomal subunit protein uL11m (144 aa).

The transit peptide at 1 to 32 directs the protein to the mitochondrion; that stretch reads MASTRTTIIKLIVPAGKATPTPPIGPALGARG.

The protein belongs to the universal ribosomal protein uL11 family. As to quaternary structure, component of the mitochondrial large ribosomal subunit (mt-LSU). Mature yeast 74S mitochondrial ribosomes consist of a small (37S) and a large (54S) subunit. The 37S small subunit contains a 15S ribosomal RNA (15S mt-rRNA) and at least 32 different proteins. The 54S large subunit contains a 21S rRNA (21S mt-rRNA) and at least 45 different proteins.

The protein resides in the mitochondrion. It localises to the cytoplasm. In terms of biological role, component of the mitochondrial ribosome (mitoribosome), a dedicated translation machinery responsible for the synthesis of mitochondrial genome-encoded proteins, including at least some of the essential transmembrane subunits of the mitochondrial respiratory chain. The mitoribosomes are attached to the mitochondrial inner membrane and translation products are cotranslationally integrated into the membrane. The chain is Large ribosomal subunit protein uL11m from Schizosaccharomyces pombe (strain 972 / ATCC 24843) (Fission yeast).